The chain runs to 184 residues: ATP synthase subunit delta (184 aa).

The protein belongs to the ATPase delta chain family. F-type ATPases have 2 components, F(1) - the catalytic core - and F(0) - the membrane proton channel. F(1) has five subunits: alpha(3), beta(3), gamma(1), delta(1), epsilon(1). F(0) has three main subunits: a(1), b(2) and c(10-14). The alpha and beta chains form an alternating ring which encloses part of the gamma chain. F(1) is attached to F(0) by a central stalk formed by the gamma and epsilon chains, while a peripheral stalk is formed by the delta and b chains.

It is found in the cell inner membrane. Its function is as follows. F(1)F(0) ATP synthase produces ATP from ADP in the presence of a proton or sodium gradient. F-type ATPases consist of two structural domains, F(1) containing the extramembraneous catalytic core and F(0) containing the membrane proton channel, linked together by a central stalk and a peripheral stalk. During catalysis, ATP synthesis in the catalytic domain of F(1) is coupled via a rotary mechanism of the central stalk subunits to proton translocation. This protein is part of the stalk that links CF(0) to CF(1). It either transmits conformational changes from CF(0) to CF(1) or is implicated in proton conduction. This chain is ATP synthase subunit delta, found in Caulobacter sp. (strain K31).